A 373-amino-acid chain; its full sequence is Histidine protein methyltransferase 1 homolog (373 aa).

Positions Ser30 to Thr42 are enriched in basic and acidic residues. 2 disordered regions span residues Ser30–Gln52 and Lys64–Lys94. A compositionally biased stretch (polar residues) spans Ala70–Leu88. Phosphoserine is present on residues Ser72 and Ser77. His154 carries the post-translational modification Tele-methylhistidine. S-adenosyl-L-methionine is bound by residues Ile168 to Thr172, Gly195, and Gln216 to Tyr218. Positions Pro247–Arg253 match the Nuclear localization signal motif. S-adenosyl-L-methionine contacts are provided by residues Gly269–Trp271 and Ser294.

Belongs to the methyltransferase superfamily. METTL18 family. In terms of assembly, interacts with GRWD1 and members of the heat shock protein 90 and 70 families; these proteins may possibly be methylation substrates for the enzyme. Post-translationally, monomethylated at His-154 through automethylation. Automethylation at His-154 positively regulates the methyltransferase activity toward RPL3. Probably methylated on other residues.

The protein localises to the cytoplasm. It localises to the cytosol. It is found in the nucleus. Its subcellular location is the nucleolus. The enzyme catalyses L-histidyl-[protein] + S-adenosyl-L-methionine = N(tele)-methyl-L-histidyl-[protein] + S-adenosyl-L-homocysteine + H(+). Its function is as follows. Protein-L-histidine N-tele-methyltransferase that specifically monomethylates RPL3, thereby regulating translation elongation. Histidine methylation of RPL3 regulates translation elongation by slowing ribosome traversal on tyrosine codons: slower elongation provides enough time for proper folding of synthesized proteins and prevents cellular aggregation of tyrosine-rich proteins. The chain is Histidine protein methyltransferase 1 homolog (METTL18) from Bos taurus (Bovine).